The following is a 120-amino-acid chain: Spermidine export protein MdtJ (120 aa).

The next 4 helical transmembrane spans lie at 1–21 (MFYW…TLSM), 31–51 (AGFI…SFAV), 54–74 (IALG…ITIF), and 81–101 (EALS…IVLI).

Belongs to the drug/metabolite transporter (DMT) superfamily. Small multidrug resistance (SMR) (TC 2.A.7.1) family. MdtJ subfamily. Forms a complex with MdtI.

The protein resides in the cell inner membrane. In terms of biological role, catalyzes the excretion of spermidine. The chain is Spermidine export protein MdtJ from Salmonella paratyphi A (strain ATCC 9150 / SARB42).